We begin with the raw amino-acid sequence, 165 residues long: 6,7-dimethyl-8-ribityllumazine synthase (165 aa).

5-amino-6-(D-ribitylamino)uracil-binding positions include tryptophan 26, 57–59 (SVE), and 79–81 (VVV). 84–85 (AT) provides a ligand contact to (2S)-2-hydroxy-3-oxobutyl phosphate. The active-site Proton donor is the histidine 87. Histidine 112 serves as a coordination point for 5-amino-6-(D-ribitylamino)uracil. Arginine 126 contacts (2S)-2-hydroxy-3-oxobutyl phosphate.

Belongs to the DMRL synthase family.

It catalyses the reaction (2S)-2-hydroxy-3-oxobutyl phosphate + 5-amino-6-(D-ribitylamino)uracil = 6,7-dimethyl-8-(1-D-ribityl)lumazine + phosphate + 2 H2O + H(+). It functions in the pathway cofactor biosynthesis; riboflavin biosynthesis; riboflavin from 2-hydroxy-3-oxobutyl phosphate and 5-amino-6-(D-ribitylamino)uracil: step 1/2. Its function is as follows. Catalyzes the formation of 6,7-dimethyl-8-ribityllumazine by condensation of 5-amino-6-(D-ribitylamino)uracil with 3,4-dihydroxy-2-butanone 4-phosphate. This is the penultimate step in the biosynthesis of riboflavin. The chain is 6,7-dimethyl-8-ribityllumazine synthase from Salinispora arenicola (strain CNS-205).